Reading from the N-terminus, the 356-residue chain is sn-glycerol-3-phosphate import ATP-binding protein UgpC (356 aa).

The 232-residue stretch at 4–235 (LKLQAVTKSW…PASRFVASFI (232 aa)) folds into the ABC transporter domain. An ATP-binding site is contributed by 37–44 (GPSGCGKS).

Belongs to the ABC transporter superfamily. sn-glycerol-3-phosphate importer (TC 3.A.1.1.3) family. The complex is composed of two ATP-binding proteins (UgpC), two transmembrane proteins (UgpA and UgpE) and a solute-binding protein (UgpB).

The protein localises to the cell inner membrane. It carries out the reaction sn-glycerol 3-phosphate(out) + ATP + H2O = sn-glycerol 3-phosphate(in) + ADP + phosphate + H(+). Part of the ABC transporter complex UgpBAEC involved in sn-glycerol-3-phosphate (G3P) import. Responsible for energy coupling to the transport system. The polypeptide is sn-glycerol-3-phosphate import ATP-binding protein UgpC (Salmonella choleraesuis (strain SC-B67)).